The sequence spans 339 residues: Phenylalanine--tRNA ligase alpha subunit (339 aa).

Glu254 provides a ligand contact to Mg(2+).

Belongs to the class-II aminoacyl-tRNA synthetase family. Phe-tRNA synthetase alpha subunit type 1 subfamily. In terms of assembly, tetramer of two alpha and two beta subunits. Mg(2+) serves as cofactor.

Its subcellular location is the cytoplasm. It carries out the reaction tRNA(Phe) + L-phenylalanine + ATP = L-phenylalanyl-tRNA(Phe) + AMP + diphosphate + H(+). The protein is Phenylalanine--tRNA ligase alpha subunit of Dictyoglomus turgidum (strain DSM 6724 / Z-1310).